Here is a 125-residue protein sequence, read N- to C-terminus: Small ribosomal subunit protein uS13 (125 aa).

The tract at residues 92–125 is disordered; the sequence is RRSLPVRGQNTQTNARTRKGKRKTVAGKKKAARK. Residues 107-125 show a composition bias toward basic residues; that stretch reads RTRKGKRKTVAGKKKAARK.

It belongs to the universal ribosomal protein uS13 family. As to quaternary structure, part of the 30S ribosomal subunit. Forms a loose heterodimer with protein S19. Forms two bridges to the 50S subunit in the 70S ribosome.

Functionally, located at the top of the head of the 30S subunit, it contacts several helices of the 16S rRNA. In the 70S ribosome it contacts the 23S rRNA (bridge B1a) and protein L5 of the 50S subunit (bridge B1b), connecting the 2 subunits; these bridges are implicated in subunit movement. Contacts the tRNAs in the A and P-sites. The sequence is that of Small ribosomal subunit protein uS13 from Chlorobium luteolum (strain DSM 273 / BCRC 81028 / 2530) (Pelodictyon luteolum).